The chain runs to 80 residues: Small ribosomal subunit protein bS16 (80 aa).

This sequence belongs to the bacterial ribosomal protein bS16 family.

This Hydrogenovibrio crunogenus (strain DSM 25203 / XCL-2) (Thiomicrospira crunogena) protein is Small ribosomal subunit protein bS16.